The sequence spans 266 residues: 3-methyl-2-oxobutanoate hydroxymethyltransferase (266 aa).

Positions 45 and 84 each coordinate Mg(2+). Residues 45 to 46 (DS), D84, and K112 each bind 3-methyl-2-oxobutanoate. Residue E114 coordinates Mg(2+). E181 (proton acceptor) is an active-site residue.

Belongs to the PanB family. Homodecamer; pentamer of dimers. The cofactor is Mg(2+).

The protein resides in the cytoplasm. It catalyses the reaction 3-methyl-2-oxobutanoate + (6R)-5,10-methylene-5,6,7,8-tetrahydrofolate + H2O = 2-dehydropantoate + (6S)-5,6,7,8-tetrahydrofolate. Its pathway is cofactor biosynthesis; (R)-pantothenate biosynthesis; (R)-pantoate from 3-methyl-2-oxobutanoate: step 1/2. Catalyzes the reversible reaction in which hydroxymethyl group from 5,10-methylenetetrahydrofolate is transferred onto alpha-ketoisovalerate to form ketopantoate. This chain is 3-methyl-2-oxobutanoate hydroxymethyltransferase, found in Pseudomonas syringae pv. syringae (strain B728a).